Reading from the N-terminus, the 519-residue chain is Laccase-2 (519 aa).

The first 20 residues, 1-20, serve as a signal peptide directing secretion; the sequence is MGLQRFSFFVTLALVARSLA. Plastocyanin-like domains are found at residues 22–147 and 159–301; these read IGPV…FVVY and VDNE…ILRY. An N-linked (GlcNAc...) asparagine glycan is attached at Asn74. His84, His86, His129, and His131 together coordinate Cu cation. Intrachain disulfides connect Cys105-Cys508 and Cys137-Cys225. Asn161, Asn228, Asn237, Asn271, Asn353, and Asn361 each carry an N-linked (GlcNAc...) asparagine glycan. The Plastocyanin-like 3 domain maps to 368–490; it reads TVPVLLQILS…AGFAIVFAED (123 aa). Cu cation contacts are provided by His415, His418, His420, His472, Cys473, His474, and His478.

The protein belongs to the multicopper oxidase family. Homodimer. Requires Cu cation as cofactor.

The protein resides in the secreted. It catalyses the reaction 4 hydroquinone + O2 = 4 benzosemiquinone + 2 H2O. Functionally, lignin degradation and detoxification of lignin-derived products. This chain is Laccase-2, found in Trametes villosa (White-rot fungus).